Reading from the N-terminus, the 81-residue chain is uncharacterized protein (81 aa).

Residues L55–K81 are disordered.

This is an uncharacterized protein from Thermoproteus tenax virus 1 (strain KRA1) (TTV1).